The following is a 150-amino-acid chain: Arginine repressor (150 aa).

This sequence belongs to the ArgR family.

The protein localises to the cytoplasm. Its pathway is amino-acid biosynthesis; L-arginine biosynthesis [regulation]. In terms of biological role, regulates arginine biosynthesis genes. This chain is Arginine repressor, found in Desulfitobacterium hafniense (strain DSM 10664 / DCB-2).